The sequence spans 353 residues: MNGNQKLDAYNQEKQNFIQHFSQIVKVLTEKELGHPEIGDAIARLKEVLEYNALGGKYNRGLTVVQAFQELVEPKKQDAESLQRALTVGWCVELLQAFFLVSDDIMDSSLTRRGQICWYQKPGIGLDAINDALLLEASIYRLLKFYCREQPYYLNLLELFLQSSYQTEIGQTLDLMTAPQGHVDLGRYTEKRYKSIVKYKTAFYSFYLPIAAAMYMAGIDGEKEHANALKILMEMGEFFQVQDDYLDLFGDPSVTGKVGTDIQDNKCSWLVVQCLLRASPQQRQILEENYGQKDPEKVARVKALYEALDLQSAFFKYEEDSYNRLKSLIEQCSAPLPPSIFMELANKIYKRRK.

Positions 57, 60, and 96 each coordinate isopentenyl diphosphate. Residue lysine 57 is modified to N6-(2-hydroxyisobutyryl)lysine; alternate. Lysine 57 bears the N6-acetyllysine; alternate mark. Positions 103 and 107 each coordinate Mg(2+). A dimethylallyl diphosphate-binding site is contributed by arginine 112. Arginine 113 provides a ligand contact to isopentenyl diphosphate. Lysine 200, threonine 201, glutamine 240, lysine 257, and lysine 266 together coordinate dimethylallyl diphosphate.

It belongs to the FPP/GGPP synthase family. As to quaternary structure, homodimer. Interacts with RSAD2. Requires Mg(2+) as cofactor.

Its subcellular location is the cytoplasm. The catalysed reaction is isopentenyl diphosphate + dimethylallyl diphosphate = (2E)-geranyl diphosphate + diphosphate. It catalyses the reaction isopentenyl diphosphate + (2E)-geranyl diphosphate = (2E,6E)-farnesyl diphosphate + diphosphate. Its pathway is isoprenoid biosynthesis; farnesyl diphosphate biosynthesis; farnesyl diphosphate from geranyl diphosphate and isopentenyl diphosphate: step 1/1. The protein operates within isoprenoid biosynthesis; geranyl diphosphate biosynthesis; geranyl diphosphate from dimethylallyl diphosphate and isopentenyl diphosphate: step 1/1. Inactivated by interferon-induced RSAD2. This inactivation may result of disruption of lipid rafts at the plasma membrane, and thus have an antiviral effect since many enveloped viruses need lipid rafts to bud efficiently out of the cell. Its function is as follows. Key enzyme in isoprenoid biosynthesis which catalyzes the formation of farnesyl diphosphate (FPP), a precursor for several classes of essential metabolites including sterols, dolichols, carotenoids, and ubiquinones. FPP also serves as substrate for protein farnesylation and geranylgeranylation. Catalyzes the sequential condensation of isopentenyl pyrophosphate with the allylic pyrophosphates, dimethylallyl pyrophosphate, and then with the resultant geranylpyrophosphate to the ultimate product farnesyl pyrophosphate. The chain is Farnesyl pyrophosphate synthase (Fdps) from Mus musculus (Mouse).